Reading from the N-terminus, the 471-residue chain is Ribulose bisphosphate carboxylase large chain (471 aa).

The substrate site is built by Asn115 and Thr165. Lys167 (proton acceptor) is an active-site residue. Lys169 contributes to the substrate binding site. Lys193, Asp195, and Glu196 together coordinate Mg(2+). Residue Lys193 is modified to N6-carboxylysine. Residue His286 is the Proton acceptor of the active site. Positions 287, 319, and 371 each coordinate substrate.

This sequence belongs to the RuBisCO large chain family. Type I subfamily. Heterohexadecamer of 8 large chains and 8 small chains. The cofactor is Mg(2+).

It localises to the carboxysome. It carries out the reaction 2 (2R)-3-phosphoglycerate + 2 H(+) = D-ribulose 1,5-bisphosphate + CO2 + H2O. It catalyses the reaction D-ribulose 1,5-bisphosphate + O2 = 2-phosphoglycolate + (2R)-3-phosphoglycerate + 2 H(+). In terms of biological role, ruBisCO catalyzes two reactions: the carboxylation of D-ribulose 1,5-bisphosphate, the primary event in carbon dioxide fixation, as well as the oxidative fragmentation of the pentose substrate in the photorespiration process. Both reactions occur simultaneously and in competition at the same active site. The polypeptide is Ribulose bisphosphate carboxylase large chain (Synechococcus sp. (strain WH7803)).